Consider the following 308-residue polypeptide: Polyprenal reductase (308 aa).

The Cytoplasmic portion of the chain corresponds to 1-2; that stretch reads MT. A helical membrane pass occupies residues 3 to 23; sequence LLALVWLLLDATFLITLLWHL. Residues 24 to 65 are Lumenal-facing; that stretch reads LQGCKSGHSLLCSVFQDLIRYGKTKTGLQRPAWLQWFDIPKR. The helical transmembrane segment at 66–86 threads the bilayer; sequence CFWHFYCVSLIWNGCLLWILL. Over 87 to 120 the chain is Cytoplasmic; it reads RLLLQSVPVPEWLQLVLHFLHAGSEPQILDRELS. The helical transmembrane segment at 121–141 threads the bilayer; that stretch reads VILALALLWLHSLRRLLECLF. At 142 to 148 the chain is on the lumenal side; the sequence is VSVFSNG. The chain crosses the membrane as a helical span at residues 149 to 169; it reads VIHLVQYCFGLGYYFLIGITV. The Cytoplasmic portion of the chain corresponds to 170–184; that stretch reads LTYCPLDRRTVSTDN. A helical membrane pass occupies residues 185-205; it reads LLTQCHWYHILGLALYIWASL. Residues 206–255 are Lumenal-facing; sequence HQYRCHCILAGLRKSASGNVINLNHSVPCGDWFERVSCPHYFAELLIYVS. A helical transmembrane segment spans residues 256–276; that stretch reads IAVVFGLLNTIWWLVVLYVLL. Residues 277-308 lie on the Cytoplasmic side of the membrane; the sequence is NQALAALLCHEFYHEKFDTYPIHRKAFIPFIF.

It belongs to the steroid 5-alpha reductase family. Polyprenal reductase subfamily.

The protein localises to the endoplasmic reticulum membrane. It carries out the reaction a di-trans,poly-cis-dolichal + NADP(+) = a di-trans,poly-cis-polyprenal + NADPH + H(+). It catalyses the reaction a 3-oxo-5alpha-steroid + NADP(+) = a 3-oxo-Delta(4)-steroid + NADPH + H(+). The enzyme catalyses androst-4-ene-3,17-dione + NADPH + H(+) = 5alpha-androstan-3,17-dione + NADP(+). The catalysed reaction is 17beta-hydroxy-5alpha-androstan-3-one + NADP(+) = testosterone + NADPH + H(+). The protein operates within protein modification; protein glycosylation. Plays a key role in early steps of protein N-linked glycosylation by being involved in the conversion of polyprenol into dolichol. Acts as a polyprenal reductase that mediates the reduction of polyprenal into dolichal in a NADP-dependent mechanism. Dolichols are required for the synthesis of dolichol-linked monosaccharides and the oligosaccharide precursor used for N-glycosylation. Also able to convert testosterone (T) into 5-alpha-dihydrotestosterone (DHT). The chain is Polyprenal reductase (srd5a3) from Xenopus tropicalis (Western clawed frog).